Consider the following 796-residue polypeptide: Polyribonucleotide nucleotidyltransferase (796 aa).

Residues Asp-490 and Asp-496 each coordinate Mg(2+). Positions 557–616 constitute a KH domain; the sequence is PRIESIFINKDKIRNVIGSGGKNIRDICEKTGAKIEIIQDGTVMIYAVNNEAVEYAKSMI. Residues 626–693 enclose the S1 motif domain; the sequence is GKVFEGTVVE…DREHVQLSMR (68 aa). The span at 714–736 shows a compositional bias: low complexity; that stretch reads SFSDDSSSSGTSSSGSSFKESYS. A disordered region spans residues 714-796; it reads SFSDDSSSSG…HEVPRKPRFF (83 aa). Residues 740–755 show a composition bias toward basic residues; the sequence is HGSHEKRRSGGSRSSR. Over residues 771–784 the composition is skewed to low complexity; the sequence is SDFGNNNRSFSNSR. Residues 785-796 are compositionally biased toward basic and acidic residues; that stretch reads NGHEVPRKPRFF.

It belongs to the polyribonucleotide nucleotidyltransferase family. The cofactor is Mg(2+).

The protein localises to the cytoplasm. The enzyme catalyses RNA(n+1) + phosphate = RNA(n) + a ribonucleoside 5'-diphosphate. In terms of biological role, involved in mRNA degradation. Catalyzes the phosphorolysis of single-stranded polyribonucleotides processively in the 3'- to 5'-direction. This Ehrlichia canis (strain Jake) protein is Polyribonucleotide nucleotidyltransferase.